The primary structure comprises 202 residues: Protein GrpE 1 (202 aa).

It belongs to the GrpE family. Homodimer.

The protein localises to the cytoplasm. Its function is as follows. Participates actively in the response to hyperosmotic and heat shock by preventing the aggregation of stress-denatured proteins, in association with DnaK and GrpE. It is the nucleotide exchange factor for DnaK and may function as a thermosensor. Unfolded proteins bind initially to DnaJ; upon interaction with the DnaJ-bound protein, DnaK hydrolyzes its bound ATP, resulting in the formation of a stable complex. GrpE releases ADP from DnaK; ATP binding to DnaK triggers the release of the substrate protein, thus completing the reaction cycle. Several rounds of ATP-dependent interactions between DnaJ, DnaK and GrpE are required for fully efficient folding. This Buchnera aphidicola subsp. Schizaphis graminum (strain Sg) protein is Protein GrpE 1.